The sequence spans 166 residues: Ribosome maturation factor RimM (166 aa).

One can recognise a PRC barrel domain in the interval 90–165 (NDNDAFSIFY…IITLKNIEGL (76 aa)).

The protein belongs to the RimM family. In terms of assembly, binds ribosomal protein uS19.

It localises to the cytoplasm. An accessory protein needed during the final step in the assembly of 30S ribosomal subunit, possibly for assembly of the head region. Essential for efficient processing of 16S rRNA. May be needed both before and after RbfA during the maturation of 16S rRNA. It has affinity for free ribosomal 30S subunits but not for 70S ribosomes. This is Ribosome maturation factor RimM from Mesoplasma florum (strain ATCC 33453 / NBRC 100688 / NCTC 11704 / L1) (Acholeplasma florum).